The chain runs to 273 residues: Structural protein ORF273 (273 aa).

The protein localises to the virion. This Acidianus convivator (ATV) protein is Structural protein ORF273.